An 859-amino-acid polypeptide reads, in one-letter code: Leucine--tRNA ligase (859 aa).

The short motif at 42–52 (PYPSGRLHMGH) is the 'HIGH' region element. Residues 618-622 (KMSKS) carry the 'KMSKS' region motif. Lys621 is an ATP binding site.

Belongs to the class-I aminoacyl-tRNA synthetase family.

The protein resides in the cytoplasm. It catalyses the reaction tRNA(Leu) + L-leucine + ATP = L-leucyl-tRNA(Leu) + AMP + diphosphate. This is Leucine--tRNA ligase from Shewanella amazonensis (strain ATCC BAA-1098 / SB2B).